Here is a 252-residue protein sequence, read N- to C-terminus: Indole-3-glycerol phosphate synthase (252 aa).

Belongs to the TrpC family.

The catalysed reaction is 1-(2-carboxyphenylamino)-1-deoxy-D-ribulose 5-phosphate + H(+) = (1S,2R)-1-C-(indol-3-yl)glycerol 3-phosphate + CO2 + H2O. It participates in amino-acid biosynthesis; L-tryptophan biosynthesis; L-tryptophan from chorismate: step 4/5. The sequence is that of Indole-3-glycerol phosphate synthase from Listeria monocytogenes serotype 4b (strain CLIP80459).